The sequence spans 393 residues: NAD(P)H-quinone oxidoreductase subunit H, chloroplastic (393 aa).

This sequence belongs to the complex I 49 kDa subunit family. In terms of assembly, NDH is composed of at least 16 different subunits, 5 of which are encoded in the nucleus.

The protein localises to the plastid. The protein resides in the chloroplast thylakoid membrane. The catalysed reaction is a plastoquinone + NADH + (n+1) H(+)(in) = a plastoquinol + NAD(+) + n H(+)(out). It carries out the reaction a plastoquinone + NADPH + (n+1) H(+)(in) = a plastoquinol + NADP(+) + n H(+)(out). Functionally, NDH shuttles electrons from NAD(P)H:plastoquinone, via FMN and iron-sulfur (Fe-S) centers, to quinones in the photosynthetic chain and possibly in a chloroplast respiratory chain. The immediate electron acceptor for the enzyme in this species is believed to be plastoquinone. Couples the redox reaction to proton translocation, and thus conserves the redox energy in a proton gradient. The chain is NAD(P)H-quinone oxidoreductase subunit H, chloroplastic from Spinacia oleracea (Spinach).